A 525-amino-acid chain; its full sequence is Light-independent protochlorophyllide reductase subunit B (525 aa).

Asp36 serves as a coordination point for [4Fe-4S] cluster. Asp274 functions as the Proton donor in the catalytic mechanism. Position 409-410 (409-410) interacts with substrate; it reads GL. The segment at 433 to 464 is disordered; that stretch reads HGGKAVAREESPVAPADLAPAATSDTPAAPSP. The segment covering 444 to 464 has biased composition (low complexity); the sequence is PVAPADLAPAATSDTPAAPSP.

It belongs to the ChlB/BchB/BchZ family. As to quaternary structure, protochlorophyllide reductase is composed of three subunits; BchL, BchN and BchB. Forms a heterotetramer of two BchB and two BchN subunits. Requires [4Fe-4S] cluster as cofactor.

The enzyme catalyses chlorophyllide a + oxidized 2[4Fe-4S]-[ferredoxin] + 2 ADP + 2 phosphate = protochlorophyllide a + reduced 2[4Fe-4S]-[ferredoxin] + 2 ATP + 2 H2O. The protein operates within porphyrin-containing compound metabolism; bacteriochlorophyll biosynthesis (light-independent). Component of the dark-operative protochlorophyllide reductase (DPOR) that uses Mg-ATP and reduced ferredoxin to reduce ring D of protochlorophyllide (Pchlide) to form chlorophyllide a (Chlide). This reaction is light-independent. The NB-protein (BchN-BchB) is the catalytic component of the complex. The chain is Light-independent protochlorophyllide reductase subunit B from Rhodobacter capsulatus (strain ATCC BAA-309 / NBRC 16581 / SB1003).